The chain runs to 343 residues: Ribosomal RNA small subunit methyltransferase C (343 aa).

It belongs to the methyltransferase superfamily. RsmC family. Monomer.

It is found in the cytoplasm. It catalyses the reaction guanosine(1207) in 16S rRNA + S-adenosyl-L-methionine = N(2)-methylguanosine(1207) in 16S rRNA + S-adenosyl-L-homocysteine + H(+). Functionally, specifically methylates the guanine in position 1207 of 16S rRNA in the 30S particle. In Escherichia coli O7:K1 (strain IAI39 / ExPEC), this protein is Ribosomal RNA small subunit methyltransferase C.